The chain runs to 208 residues: Small ribosomal subunit protein uS2 (208 aa).

Positions 189 to 208 (KPDQDLPVPPEEFETRLVQT) are disordered.

Belongs to the universal ribosomal protein uS2 family.

The chain is Small ribosomal subunit protein uS2 from Pyrobaculum arsenaticum (strain DSM 13514 / JCM 11321 / PZ6).